The primary structure comprises 567 residues: MKTISRQAYADMFGPTTGDRLRLADTELFLEIEKDFTTYGEEVKFGGGKVIRDGMGQSQVVSAECVDVLITNAIILDYWGIVKADIGIKDGRIVGIGKAGNPDVQPNVDIVIGPGTEVVAGEGKIVTAGGIDTHIHFICPQQAQEGLVSGVTTFIGGGTGPVAGTNATTVTPGIWNMYRMLEAVDELPINVGLFGKGCVSQPEAIREQITAGAIGLKIHEDWGATPMAIHNCLNVADEMDVQVAIHSDTLNEGGFYEETVKAIAGRVIHVFHTEGAGGGHAPDVIKSVGEPNILPASTNPTMPYTINTVDEHLDMLMVCHHLDPSIPEDVAFAESRIRRETIAAEDILHDMGAISVMSSDSQAMGRVGEVILRTWQCAHKMKLQRGTLAGDSADNDNNRIKRYIAKYTINPALAHGIAHTVGSIEKGKLADIVLWDPAFFGVKPALIIKGGMVAYAPMGDINAAIPTPQPVHYRPMYACLGKAKYQTSMIFMSKAGIEAGVPEKLGLKSLIGRVEGCRHITKASMIHNNYVPHIELDPQTYIVKADGVPLVCEPATELPMAQRYFLF.

Residues 129 to 567 (GGIDTHIHFI…LPMAQRYFLF (439 aa)) form the Urease domain. Ni(2+) contacts are provided by His-134, His-136, and Lys-217. N6-carboxylysine is present on Lys-217. His-219 is a binding site for substrate. Positions 246 and 272 each coordinate Ni(2+). The Proton donor role is filled by His-320. Residue Asp-360 participates in Ni(2+) binding.

Belongs to the metallo-dependent hydrolases superfamily. Urease alpha subunit family. In terms of assembly, probable heterotrimer of UreA (gamma), UreB (beta) and UreC (alpha) subunits. Three heterotrimers associate to form the active enzyme. The trimeric urease interacts with an accessory complex composed of UreD, UreF and UreG, which is required for the assembly of the nickel containing metallocenter of UreC. The UreE protein may also play a direct role in nickel transfer to the urease apoprotein. Requires Ni cation as cofactor. In terms of processing, carboxylation allows a single lysine to coordinate two nickel ions.

The protein resides in the cytoplasm. It catalyses the reaction urea + 2 H2O + H(+) = hydrogencarbonate + 2 NH4(+). The protein operates within nitrogen metabolism; urea degradation; CO(2) and NH(3) from urea (urease route): step 1/1. The polypeptide is Urease subunit alpha (Proteus mirabilis (strain HI4320)).